Consider the following 347-residue polypeptide: Putative histone PARylation factor 1-like (347 aa).

The residue at position 1 (methionine 1) is an N-acetylmethionine. 2 positions are modified to N6-acetyllysine: lysine 187 and lysine 234.

Belongs to the HPF1 family.

In Homo sapiens (Human), this protein is Putative histone PARylation factor 1-like.